A 309-amino-acid chain; its full sequence is Probable RuBisCO transcriptional regulator (309 aa).

The 58-residue stretch at 5 to 62 (FTLQQLRILKAIATEKSFTRAAEVLFVSQPSLSKQIKTLESRLNISLLNRENNIVSLT) folds into the HTH lysR-type domain. The segment at residues 22-41 (FTRAAEVLFVSQPSLSKQIK) is a DNA-binding region (H-T-H motif).

The protein belongs to the LysR transcriptional regulatory family.

The protein localises to the plastid. It is found in the chloroplast. Its function is as follows. Trans-acting transcriptional regulator of RuBisCO genes (rbcL and rbcS) expression. The sequence is that of Probable RuBisCO transcriptional regulator (rbcR) from Trieres chinensis (Marine centric diatom).